A 1436-amino-acid polypeptide reads, in one-letter code: MAP kinase kinase kinase win1 (1436 aa).

Residues 56 to 85 (LELPNNGKEENHRRPSVARSSSDRSKASAK) form a disordered region. Residues 76–85 (SSDRSKASAK) are compositionally biased toward basic and acidic residues. S224 carries the phosphoserine modification. T226 carries the phosphothreonine modification. Residues 282–1123 (EDSDLDSETS…SNITIRWQQG (842 aa)) are interaction with tea4. Positions 1120-1406 (WQQGGLIGSG…AAELLMDPWV (287 aa)) constitute a Protein kinase domain. ATP is bound by residues 1126–1134 (IGSGSFGTV) and K1149. D1244 acts as the Proton acceptor in catalysis.

The protein belongs to the protein kinase superfamily. STE Ser/Thr protein kinase family. MAP kinase kinase kinase subfamily. As to quaternary structure, interacts with tea4.

The catalysed reaction is L-seryl-[protein] + ATP = O-phospho-L-seryl-[protein] + ADP + H(+). It catalyses the reaction L-threonyl-[protein] + ATP = O-phospho-L-threonyl-[protein] + ADP + H(+). Its function is as follows. Involved in a signal transduction pathway that is activated by changes in the osmolarity of the extracellular environment. Activates the wis1 MAP kinase kinase by phosphorylation. This Schizosaccharomyces pombe (strain 972 / ATCC 24843) (Fission yeast) protein is MAP kinase kinase kinase win1 (win1).